Here is a 129-residue protein sequence, read N- to C-terminus: MASAAASAVSFARPVKAICVNSVSFSALRKDNVSFRLQPVPQRFSVCCAAKKETVEKVCDIVKSQLALSDDTEVSGSSTFADLGADSLDTVEIVMGLEEAFGISVEESSAQTIATVEDAANLIDSLVGK.

The transit peptide at 1 to 49 directs the protein to the chloroplast; that stretch reads MASAAASAVSFARPVKAICVNSVSFSALRKDNVSFRLQPVPQRFSVCCA. The Carrier domain maps to 52 to 127; that stretch reads KETVEKVCDI…DAANLIDSLV (76 aa). Ser-87 carries the post-translational modification O-(pantetheine 4'-phosphoryl)serine.

The protein belongs to the acyl carrier protein (ACP) family. In terms of processing, 4'-phosphopantetheine is transferred from CoA to a specific serine of apo-ACP by acpS. This modification is essential for activity because fatty acids are bound in thioester linkage to the sulfhydryl of the prosthetic group.

It is found in the plastid. It localises to the chloroplast. The protein operates within lipid metabolism; fatty acid biosynthesis. Its function is as follows. Carrier of the growing fatty acid chain in fatty acid biosynthesis. This is Acyl carrier protein 2, chloroplastic (ACL1.2) from Hordeum vulgare (Barley).